A 275-amino-acid chain; its full sequence is NH(3)-dependent NAD(+) synthetase (275 aa).

ATP is bound at residue 50 to 57 (GISGGVDS). Asp-56 lines the Mg(2+) pocket. Arg-147 is a binding site for deamido-NAD(+). Thr-167 is an ATP binding site. Mg(2+) is bound at residue Glu-172. Residues Lys-180 and Asp-187 each coordinate deamido-NAD(+). Positions 196 and 218 each coordinate ATP. Position 267–268 (267–268 (HK)) interacts with deamido-NAD(+).

Belongs to the NAD synthetase family. In terms of assembly, homodimer.

It carries out the reaction deamido-NAD(+) + NH4(+) + ATP = AMP + diphosphate + NAD(+) + H(+). The protein operates within cofactor biosynthesis; NAD(+) biosynthesis; NAD(+) from deamido-NAD(+) (ammonia route): step 1/1. Catalyzes the ATP-dependent amidation of deamido-NAD to form NAD. Uses ammonia as a nitrogen source. This is NH(3)-dependent NAD(+) synthetase from Pseudomonas syringae pv. syringae (strain B728a).